The sequence spans 286 residues: Energy-coupling factor transporter ATP-binding protein EcfA2 (286 aa).

Residues 3 to 246 enclose the ABC transporter domain; it reads IQFNQVSYIY…KTQLLKWHIE (244 aa). 40 to 47 is an ATP binding site; the sequence is GQTGSGKS.

This sequence belongs to the ABC transporter superfamily. Energy-coupling factor EcfA family. Forms a stable energy-coupling factor (ECF) transporter complex composed of 2 membrane-embedded substrate-binding proteins (S component), 2 ATP-binding proteins (A component) and 2 transmembrane proteins (T component).

It is found in the cell membrane. Its function is as follows. ATP-binding (A) component of a common energy-coupling factor (ECF) ABC-transporter complex. Unlike classic ABC transporters this ECF transporter provides the energy necessary to transport a number of different substrates. This chain is Energy-coupling factor transporter ATP-binding protein EcfA2, found in Staphylococcus epidermidis (strain ATCC 35984 / DSM 28319 / BCRC 17069 / CCUG 31568 / BM 3577 / RP62A).